A 458-amino-acid polypeptide reads, in one-letter code: Histidine--tRNA ligase (458 aa).

The protein belongs to the class-II aminoacyl-tRNA synthetase family. As to quaternary structure, homodimer.

Its subcellular location is the cytoplasm. It catalyses the reaction tRNA(His) + L-histidine + ATP = L-histidyl-tRNA(His) + AMP + diphosphate + H(+). The sequence is that of Histidine--tRNA ligase from Micrococcus luteus (strain ATCC 4698 / DSM 20030 / JCM 1464 / CCM 169 / CCUG 5858 / IAM 1056 / NBRC 3333 / NCIMB 9278 / NCTC 2665 / VKM Ac-2230) (Micrococcus lysodeikticus).